Reading from the N-terminus, the 299-residue chain is Porphobilinogen deaminase (299 aa).

Cys242 bears the S-(dipyrrolylmethanemethyl)cysteine mark.

It belongs to the HMBS family. In terms of assembly, monomer. It depends on dipyrromethane as a cofactor.

The catalysed reaction is 4 porphobilinogen + H2O = hydroxymethylbilane + 4 NH4(+). It participates in porphyrin-containing compound metabolism; protoporphyrin-IX biosynthesis; coproporphyrinogen-III from 5-aminolevulinate: step 2/4. Its function is as follows. Tetrapolymerization of the monopyrrole PBG into the hydroxymethylbilane pre-uroporphyrinogen in several discrete steps. This is Porphobilinogen deaminase from Rickettsia typhi (strain ATCC VR-144 / Wilmington).